Here is a 65-residue protein sequence, read N- to C-terminus: Small ribosomal subunit protein bS21 (65 aa).

Over residues 46–57 (RLKRSRSKRRAQ) the composition is skewed to basic residues. The interval 46–65 (RLKRSRSKRRAQRANEERNS) is disordered.

Belongs to the bacterial ribosomal protein bS21 family.

This Chlorobaculum tepidum (strain ATCC 49652 / DSM 12025 / NBRC 103806 / TLS) (Chlorobium tepidum) protein is Small ribosomal subunit protein bS21.